Here is a 336-residue protein sequence, read N- to C-terminus: tRNA(Ile)-lysidine synthase (336 aa).

40 to 45 (SGGQDS) contacts ATP.

It belongs to the tRNA(Ile)-lysidine synthase family.

The protein resides in the cytoplasm. The enzyme catalyses cytidine(34) in tRNA(Ile2) + L-lysine + ATP = lysidine(34) in tRNA(Ile2) + AMP + diphosphate + H(+). In terms of biological role, ligates lysine onto the cytidine present at position 34 of the AUA codon-specific tRNA(Ile) that contains the anticodon CAU, in an ATP-dependent manner. Cytidine is converted to lysidine, thus changing the amino acid specificity of the tRNA from methionine to isoleucine. The sequence is that of tRNA(Ile)-lysidine synthase from Prochlorococcus marinus subsp. pastoris (strain CCMP1986 / NIES-2087 / MED4).